We begin with the raw amino-acid sequence, 382 residues long: Pregnancy-associated glycoprotein 1 (382 aa).

Residues 1–15 form the signal peptide; it reads MKWLVLLGLVAFSEC. The propeptide at 16-53 is activation peptide; that stretch reads IVKIPLRRVKTMRNTLSGKKMLNSFLKEHAYRLSQISF. Residues Asn57 and Asn74 are each glycosylated (N-linked (GlcNAc...) asparagine). The region spanning 71–379 is the Peptidase A1 domain; sequence YVGNITIGTP…DRGNDRIGLA (309 aa). A disulfide bridge links Cys102 with Cys110. N-linked (GlcNAc...) asparagine glycosylation is present at Asn128. 2 disulfide bridges follow: Cys263–Cys267 and Cys305–Cys339.

This sequence belongs to the peptidase A1 family. In terms of tissue distribution, trophoblast and placental tissue. Produced specifically in the invasive binucleate cells of the placenta.

It localises to the secreted. It is found in the extracellular space. Functionally, has no proteolytic activity. The polypeptide is Pregnancy-associated glycoprotein 1 (Ovis aries (Sheep)).